Here is a 321-residue protein sequence, read N- to C-terminus: Polyamine aminopropyltransferase (321 aa).

Positions 23–256 (HLLYLEHAGP…DEWSFSFGSD (234 aa)) constitute a PABS domain. S-methyl-5'-thioadenosine is bound at residue Q53. Residues H84 and D108 each coordinate spermidine. Residues E127 and 159–160 (DG) contribute to the S-methyl-5'-thioadenosine site. The Proton acceptor role is filled by D177.

Belongs to the spermidine/spermine synthase family. In terms of assembly, homodimer or homotetramer.

The protein localises to the cytoplasm. The catalysed reaction is S-adenosyl 3-(methylsulfanyl)propylamine + putrescine = S-methyl-5'-thioadenosine + spermidine + H(+). It functions in the pathway amine and polyamine biosynthesis; spermidine biosynthesis; spermidine from putrescine: step 1/1. In terms of biological role, catalyzes the irreversible transfer of a propylamine group from the amino donor S-adenosylmethioninamine (decarboxy-AdoMet) to putrescine (1,4-diaminobutane) to yield spermidine. In Korarchaeum cryptofilum (strain OPF8), this protein is Polyamine aminopropyltransferase.